The following is a 272-amino-acid chain: Small ribosomal subunit protein mS23 (272 aa).

The disordered stretch occupies residues 236–272; the sequence is AGATGGAKEESDPAILPELEVAESTSESAQPAEIRTG.

It belongs to the mitochondrion-specific ribosomal protein mS23 family. As to quaternary structure, component of the mitochondrial small ribosomal subunit.

The protein resides in the mitochondrion. The sequence is that of Small ribosomal subunit protein mS23 (RSM25) from Coccidioides immitis (strain RS) (Valley fever fungus).